The chain runs to 611 residues: Procollagen galactosyltransferase 1-B (611 aa).

A signal peptide spans 1–24; sequence MSQAGVERLLKGLQILVLVLRLSA. 5 N-linked (GlcNAc...) asparagine glycosylation sites follow: Asn-85, Asn-173, Asn-370, Asn-373, and Asn-568. Over residues 576–591 the composition is skewed to basic and acidic residues; the sequence is DRAKSRKTHQQEKLRS. A disordered region spans residues 576-611; sequence DRAKSRKTHQQEKLRSEALNTPSMGSPFDNTARDEL. The short motif at 608 to 611 is the Prevents secretion from ER element; it reads RDEL.

Belongs to the glycosyltransferase 25 family.

The protein resides in the endoplasmic reticulum lumen. It catalyses the reaction (5R)-5-hydroxy-L-lysyl-[collagen] + UDP-alpha-D-galactose = (5R)-5-O-(beta-D-galactosyl)-5-hydroxy-L-lysyl-[collagen] + UDP + H(+). Functionally, beta-galactosyltransferase that transfers beta-galactose to hydroxylysine residues of type I collagen. By acting on collagen glycosylation, facilitates the formation of collagen triple helix. This chain is Procollagen galactosyltransferase 1-B (colgalt1-b), found in Xenopus laevis (African clawed frog).